We begin with the raw amino-acid sequence, 333 residues long: D-lactate dehydrogenase (333 aa).

NAD(+) contacts are provided by residues 156 to 157, D176, 207 to 208, N213, 234 to 236, and D260; these read HI, VP, and VSR. R236 is a catalytic residue. E265 is a catalytic residue. H297 (proton donor) is an active-site residue.

It belongs to the D-isomer specific 2-hydroxyacid dehydrogenase family. In terms of assembly, homodimer.

It catalyses the reaction (R)-lactate + NAD(+) = pyruvate + NADH + H(+). In Lactobacillus delbrueckii subsp. bulgaricus (strain ATCC 11842 / DSM 20081 / BCRC 10696 / JCM 1002 / NBRC 13953 / NCIMB 11778 / NCTC 12712 / WDCM 00102 / Lb 14), this protein is D-lactate dehydrogenase (ldhA).